Here is a 640-residue protein sequence, read N- to C-terminus: 1,4-alpha-glucan branching enzyme GlgB (640 aa).

The active-site Nucleophile is D318. E371 acts as the Proton donor in catalysis.

Belongs to the glycosyl hydrolase 13 family. GlgB subfamily. Monomer.

It catalyses the reaction Transfers a segment of a (1-&gt;4)-alpha-D-glucan chain to a primary hydroxy group in a similar glucan chain.. The protein operates within glycan biosynthesis; glycogen biosynthesis. Functionally, catalyzes the formation of the alpha-1,6-glucosidic linkages in glycogen by scission of a 1,4-alpha-linked oligosaccharide from growing alpha-1,4-glucan chains and the subsequent attachment of the oligosaccharide to the alpha-1,6 position. In Francisella tularensis subsp. tularensis (strain FSC 198), this protein is 1,4-alpha-glucan branching enzyme GlgB.